The following is a 130-amino-acid chain: Small ribosomal subunit protein uS9 (130 aa).

This sequence belongs to the universal ribosomal protein uS9 family.

In Onion yellows phytoplasma (strain OY-M), this protein is Small ribosomal subunit protein uS9.